The sequence spans 398 residues: MSVMGEDALVPRARSRLPVMCAAGLGFLTLAVAWLLDSDKFSERAGIIAFGLMLERFIYCICLLAEELLFHSRQRYHGRMSEIFRACFRGSGILGMCAIFLMLMLGGVSFSVKQWSHFNLMCAGYMLLNSLGVLGPAPVEISEICEAKKMNVAHGLAWSFYIGYLKFLLPALEVNVREYSRRERLSSPRLHILLPLNARVPSKPEEEDTNVVFHENLPDLKLDRAGVRKRSYTNSVYKITHNNETFSCILEYATPLLTLYQMSQESSAGFGERERKQQVLLFYRTLSQILDNSLECRNRYRLILLNDEHTGDPHYLSRELFQNLKQQDGEIFMDPTNEVHPVPEEGPVGNCNGALQATFHEEPMSDEPTLMFSRPQSLRSEPVETTDYFNPSSAMKQN.

Topologically, residues 1-16 (MSVMGEDALVPRARSR) are cytoplasmic. Residues 17-37 (LPVMCAAGLGFLTLAVAWLLD) traverse the membrane as a helical segment. The Lumenal portion of the chain corresponds to 38 to 44 (SDKFSER). A helical transmembrane segment spans residues 45–65 (AGIIAFGLMLERFIYCICLLA). Topologically, residues 66–91 (EELLFHSRQRYHGRMSEIFRACFRGS) are cytoplasmic. The helical transmembrane segment at 92-112 (GILGMCAIFLMLMLGGVSFSV) threads the bilayer. At 113–120 (KQWSHFNL) the chain is on the lumenal side. The helical transmembrane segment at 121-141 (MCAGYMLLNSLGVLGPAPVEI) threads the bilayer. Residues 142–398 (SEICEAKKMN…FNPSSAMKQN (257 aa)) are Cytoplasmic-facing. Residues 150 to 331 (MNVAHGLAWS…QNLKQQDGEI (182 aa)) are cyclic dinucleotide-binding domain (CBD). Positions 159, 164, 230, and 254 each coordinate 2',3'-cGAMP. 3',3'-c-di-GMP-binding positions include Ser-159, Tyr-164, 230–233 (RSYT), and Thr-254. The interval 375-398 (PQSLRSEPVETTDYFNPSSAMKQN) is disordered. Residues 387–398 (DYFNPSSAMKQN) are compositionally biased toward polar residues.

The protein belongs to the STING family. As to quaternary structure, homodimer; forms a homodimer in absence of cyclic nucleotide (c-di-GMP or cGAMP). Homotetramer; in presence of cyclic nucleotide (c-di-GMP or cGAMP), forms tetramers and higher-order oligomers through side-by-side packing. Interacts (when phosphorylated) with irf3; following activation and phosphorylation by tbk1, recruits irf3. Phosphorylation by TBK1 leads to activation and production of IFN-beta. Following cyclic nucleotide (c-di-GMP or cGAMP)-binding, activation and translocation from the endoplasmic reticulum, STING1 is phosphorylated by tbk1, leading to recruitment of the transcription factor irf3 to induce type-I interferons and other cytokines.

The protein resides in the endoplasmic reticulum membrane. It is found in the cytoplasm. Its subcellular location is the perinuclear region. It localises to the endoplasmic reticulum-Golgi intermediate compartment membrane. The protein localises to the golgi apparatus membrane. The protein resides in the cytoplasmic vesicle. It is found in the autophagosome membrane. It catalyses the reaction H(+)(in) = H(+)(out). Facilitator of innate immune signaling that acts as a sensor of cytosolic DNA from bacteria and viruses and promotes the production of type I interferon (IFN-alpha and IFN-beta). Innate immune response is triggered in response to non-CpG double-stranded DNA from viruses and bacteria delivered to the cytoplasm. Acts by binding cyclic dinucleotides: recognizes and binds cyclic di-GMP (c-di-GMP), a second messenger produced by bacteria, and cyclic GMP-AMP (cGAMP), a messenger produced by CGAS in response to DNA virus in the cytosol. Upon binding of c-di-GMP or cGAMP, STING1 oligomerizes and is able to activate both NF-kappa-B and irf3 transcription pathways to induce expression of type I interferon and exert a potent anti-viral state. Exhibits 2',3' phosphodiester linkage-specific ligand recognition: can bind both 2'-3' linked cGAMP and 3'-3' linked cGAMP but is preferentially activated by 2'-3' linked cGAMP. In addition to promote the production of type I interferons, plays a direct role in autophagy. Following cGAMP-binding, STING1 buds from the endoplasmic reticulum into COPII vesicles, which then form the endoplasmic reticulum-Golgi intermediate compartment (ERGIC). The ERGIC serves as the membrane source for LC3 lipidation, leading to formation of autophagosomes that target cytosolic DNA or DNA viruses for degradation by the lysosome. Promotes autophagy by acting as a proton channel that directs proton efflux from the Golgi to facilitate LC3 lipidation. The autophagy- and interferon-inducing activities can be uncoupled and autophagy induction is independent of TBK1 phosphorylation. The polypeptide is Stimulator of interferon genes protein (Danio rerio (Zebrafish)).